Here is a 415-residue protein sequence, read N- to C-terminus: Serine--tRNA ligase (415 aa).

Thr231–Glu233 contacts L-serine. Position 262-264 (Arg262–Glu264) interacts with ATP. Glu285 provides a ligand contact to L-serine. Glu349–Ser352 is an ATP binding site. Ser383 is an L-serine binding site.

Belongs to the class-II aminoacyl-tRNA synthetase family. Type-1 seryl-tRNA synthetase subfamily. Homodimer. The tRNA molecule binds across the dimer.

Its subcellular location is the cytoplasm. The enzyme catalyses tRNA(Ser) + L-serine + ATP = L-seryl-tRNA(Ser) + AMP + diphosphate + H(+). The catalysed reaction is tRNA(Sec) + L-serine + ATP = L-seryl-tRNA(Sec) + AMP + diphosphate + H(+). It participates in aminoacyl-tRNA biosynthesis; selenocysteinyl-tRNA(Sec) biosynthesis; L-seryl-tRNA(Sec) from L-serine and tRNA(Sec): step 1/1. Catalyzes the attachment of serine to tRNA(Ser). Is also able to aminoacylate tRNA(Sec) with serine, to form the misacylated tRNA L-seryl-tRNA(Sec), which will be further converted into selenocysteinyl-tRNA(Sec). The protein is Serine--tRNA ligase of Helicobacter acinonychis (strain Sheeba).